Consider the following 172-residue polypeptide: Small ribosomal subunit protein uS5 (172 aa).

Residues 17-80 enclose the S5 DRBM domain; the sequence is LREKMISVNR…EQARRNMFKV (64 aa).

The protein belongs to the universal ribosomal protein uS5 family. As to quaternary structure, part of the 30S ribosomal subunit. Contacts proteins S4 and S8.

Its function is as follows. With S4 and S12 plays an important role in translational accuracy. Located at the back of the 30S subunit body where it stabilizes the conformation of the head with respect to the body. In Burkholderia lata (strain ATCC 17760 / DSM 23089 / LMG 22485 / NCIMB 9086 / R18194 / 383), this protein is Small ribosomal subunit protein uS5.